The sequence spans 206 residues: Small ribosomal subunit protein uS4 (206 aa).

In terms of domain architecture, S4 RNA-binding spans 96–156; that stretch reads CRLDNVVYRM…EKAKNQLRIV (61 aa).

This sequence belongs to the universal ribosomal protein uS4 family. As to quaternary structure, part of the 30S ribosomal subunit. Contacts protein S5. The interaction surface between S4 and S5 is involved in control of translational fidelity.

Functionally, one of the primary rRNA binding proteins, it binds directly to 16S rRNA where it nucleates assembly of the body of the 30S subunit. In terms of biological role, with S5 and S12 plays an important role in translational accuracy. The protein is Small ribosomal subunit protein uS4 of Pseudomonas savastanoi pv. phaseolicola (strain 1448A / Race 6) (Pseudomonas syringae pv. phaseolicola (strain 1448A / Race 6)).